A 350-amino-acid polypeptide reads, in one-letter code: GTPase Obg (350 aa).

The Obg domain maps to 1–159; the sequence is MRFIDQTEIF…FRLHLELKLL (159 aa). Positions 160–328 constitute an OBG-type G domain; sequence AEVGIIGLPN…LLQQVWEELD (169 aa). GTP-binding positions include 166-173, 191-195, 213-216, 280-283, and 309-311; these read GLPNAGKS, FTTLI, DIPG, NKID, and SAV. Mg(2+)-binding residues include S173 and T193.

This sequence belongs to the TRAFAC class OBG-HflX-like GTPase superfamily. OBG GTPase family. As to quaternary structure, monomer. Mg(2+) is required as a cofactor.

Its subcellular location is the cytoplasm. Functionally, an essential GTPase which binds GTP, GDP and possibly (p)ppGpp with moderate affinity, with high nucleotide exchange rates and a fairly low GTP hydrolysis rate. Plays a role in control of the cell cycle, stress response, ribosome biogenesis and in those bacteria that undergo differentiation, in morphogenesis control. The protein is GTPase Obg of Acaryochloris marina (strain MBIC 11017).